The sequence spans 98 residues: Phosphoribosyl-ATP pyrophosphatase (98 aa).

It belongs to the PRA-PH family.

It localises to the cytoplasm. The catalysed reaction is 1-(5-phospho-beta-D-ribosyl)-ATP + H2O = 1-(5-phospho-beta-D-ribosyl)-5'-AMP + diphosphate + H(+). It functions in the pathway amino-acid biosynthesis; L-histidine biosynthesis; L-histidine from 5-phospho-alpha-D-ribose 1-diphosphate: step 2/9. The sequence is that of Phosphoribosyl-ATP pyrophosphatase from Haloarcula marismortui (strain ATCC 43049 / DSM 3752 / JCM 8966 / VKM B-1809) (Halobacterium marismortui).